The sequence spans 938 residues: MNWNKGGPGTKRGFGFGGFAISAGKKEEPKLPQQSHSAFGATSSSSGFGKSAPPQLPSFYKIGSKRANFDEENAYFEDEEEDSSNVDLPYIPAENSPTRQQFHSKPVDSDSDDDPLEAFMAEVEDQAARDMKRLEEKDKERKNVKGIRDDIEEEDDQEAYFRYMAENPTAGVVQEEEEDNLEYDSDGNPIAPTKKIIDPLPPIDHSEIDYPPFEKNFYNEHEEITNLTPQQLIDLRHKLNLRVSGAAPPRPGSSFAHFGFDEQLMHQIRKSEYTQPTPIQCQGVPVALSGRDMIGIAKTGSGKTAAFIWPMLIHIMDQKELEPGDGPIAVIVCPTRELCQQIHAECKRFGKAYNLRSVAVYGGGSMWEQAKALQEGAEIVVCTPGRLIDHVKKKATNLQRVSYLVFDEADRMFDMGFEYQVRSIASHVRPDRQTLLFSATFRKKIEKLARDILIDPIRVVQGDIGEANEDVTQIVEILHSGPSKWNWLTRRLVEFTSSGSVLLFVTKKANAEELANNLKQEGHNLGLLHGDMDQSERNKVISDFKKKDIPVLVATDVAARGLDIPSIKTVINYDVARDIDTHTHRIGRTGRAGEKGVAYTLLTPKDSNFAGDLVRNLEGANQHVSKELLDLAMQNAWFRKSRFKGGKGKKLNIGGGGLGYRERPGLGSENMDRGNNNVMSNYEAYKPSTGAMGDRLTAMKAAFQSQYKSHFVAASLSNQKAGSSAAGASGWTSAGSLNSVPTNSAQQGHNSPDSPVTSAAKGIPGFGNTGNISGAPVTYPSAGAQGVNNTASGNNSREGTGGSNGKRERYTENRGSSRHSHGETGNRHSDSPRHGDGGRHGDGYRHPESSSRHTDGHRHGENRHGGSAGRHGENRGANDGRNGESRKEAFNRESKMEPKMEPKVDSSKMDKVDSKTDKTADGFAVPEPPKRKKSRWDS.

Residues 1-18 (MNWNKGGPGTKRGFGFGG) show a composition bias toward gly residues. Residues 1-114 (MNWNKGGPGT…KPVDSDSDDD (114 aa)) form a disordered region. Residue Lys5 is modified to N6-acetyllysine. Residue Arg12 is modified to Omega-N-methylarginine. Over residues 35 to 52 (SHSAFGATSSSSGFGKSA) the composition is skewed to low complexity. A Phosphoserine modification is found at Ser58. The span at 70–84 (DEENAYFEDEEEDSS) shows a compositional bias: acidic residues. Phosphoserine is present on residues Ser96, Ser104, Ser109, and Ser111. The stretch at 116–157 (LEAFMAEVEDQAARDMKRLEEKDKERKNVKGIRDDIEEEDDQ) forms a coiled coil. The disordered stretch occupies residues 182-203 (EYDSDGNPIAPTKKIIDPLPPI). Position 185 is a phosphoserine (Ser185). The Q motif motif lies at 253 to 281 (SSFAHFGFDEQLMHQIRKSEYTQPTPIQC). One can recognise a Helicase ATP-binding domain in the interval 284 to 459 (VPVALSGRDM…RDILIDPIRV (176 aa)). 297–304 (AKTGSGKT) is a binding site for ATP. The short motif at 407–410 (DEAD) is the DEAD box element. A Helicase C-terminal domain is found at 487–632 (WLTRRLVEFT…HVSKELLDLA (146 aa)). 2 stretches are compositionally biased toward polar residues: residues 737–757 (LNSVPTNSAQQGHNSPDSPVT) and 786–798 (GVNNTASGNNSRE). A disordered region spans residues 737–938 (LNSVPTNSAQ…PKRKKSRWDS (202 aa)). The necessary for interaction with TP53BP2 stretch occupies residues 738–833 (NSVPTNSAQQ…TGNRHSDSPR (96 aa)). Phosphoserine is present on Ser754. Over residues 820-920 (SHGETGNRHS…KVDSKTDKTA (101 aa)) the composition is skewed to basic and acidic residues. Lys899 is covalently cross-linked (Glycyl lysine isopeptide (Lys-Gly) (interchain with G-Cter in SUMO2)).

It belongs to the DEAD box helicase family. DDX42 subfamily. As to quaternary structure, transient component of the SF3B subcomplex of the 17S U2 SnRNP complex. Interacts (via the C-terminus) with TP53BP2; the interaction is not inhibitied by TP53BP2 ubiquitination and is independent of p53/TP53. Expressed in several cell lines (at protein level). Expressed in liver, lung, tonsil, thymus, muscle and pancreatic islets.

The protein localises to the cytoplasm. It localises to the nucleus. It is found in the cajal body. Its subcellular location is the nucleus speckle. It carries out the reaction ATP + H2O = ADP + phosphate + H(+). Functionally, ATP-dependent RNA helicase that binds to partially double-stranded RNAs (dsRNAs) in order to unwind RNA secondary structures. Unwinding is promoted in the presence of single-strand binding proteins. Also mediates RNA duplex formation thereby displacing the single-strand RNA binding protein. ATP and ADP modulate its activity: ATP binding and hydrolysis by DDX42 triggers RNA strand separation, whereas the ADP-bound form of the protein triggers annealing of complementary RNA strands. Required for assembly of the 17S U2 SnRNP complex of the spliceosome, a large ribonucleoprotein complex that removes introns from transcribed pre-mRNAs: DDX42 associates transiently with the SF3B subcomplex of the 17S U2 SnRNP complex and is released after fulfilling its role in the assembly of 17S U2 SnRNP. Involved in the survival of cells by interacting with TP53BP2 and thereby counteracting the apoptosis-stimulating activity of TP53BP2. Relocalizes TP53BP2 to the cytoplasm. The sequence is that of ATP-dependent RNA helicase DDX42 from Homo sapiens (Human).